Reading from the N-terminus, the 102-residue chain is Small ribosomal subunit protein uS10 (102 aa).

Belongs to the universal ribosomal protein uS10 family. Part of the 30S ribosomal subunit.

Functionally, involved in the binding of tRNA to the ribosomes. This chain is Small ribosomal subunit protein uS10, found in Limosilactobacillus reuteri (strain DSM 20016) (Lactobacillus reuteri).